Consider the following 354-residue polypeptide: MLIFPLINDTSRKIIHIDMDAFFASVEERDNPKLKGHPVIIGSDPRLTGGRGVVSTCNYEARKFGVHSAMSSKEAYERCPQGIFISGNYEKYQAVGLQIREIFKRYTDLIEPMSIDEAYLDVTENKLGIKSAVKIAKLIQHDIWNELQLTASAGVSYNKFLAKIASDYEKPHGLTVILPEEAEVSLAPMDIAKFHGVGKKSVEKLHEMGVYTGADLLKIPEMTLIDKFGRFGFDLYRKARGISNSPVKSNRIRKSIGKERTYAKLLYSEEDIKKELTLLAQKVENSLTKHDKKGRTIVLKIRYADFSTLTKRKSLNLATQDKEQIERTAHEIYDSLEEQPRGIRLLGLTVTGFE.

In terms of domain architecture, UmuC spans 14–198; sequence IIHIDMDAFF…MDIAKFHGVG (185 aa). Residues Asp18 and Asp116 each contribute to the Mg(2+) site. Glu117 is a catalytic residue.

This sequence belongs to the DNA polymerase type-Y family. As to quaternary structure, monomer. It depends on Mg(2+) as a cofactor.

The protein resides in the cytoplasm. The enzyme catalyses DNA(n) + a 2'-deoxyribonucleoside 5'-triphosphate = DNA(n+1) + diphosphate. In terms of biological role, poorly processive, error-prone DNA polymerase involved in untargeted mutagenesis. Copies undamaged DNA at stalled replication forks, which arise in vivo from mismatched or misaligned primer ends. These misaligned primers can be extended by PolIV. Exhibits no 3'-5' exonuclease (proofreading) activity. May be involved in translesional synthesis, in conjunction with the beta clamp from PolIII. This chain is DNA polymerase IV, found in Streptococcus sanguinis (strain SK36).